Consider the following 538-residue polypeptide: MATITTLASSVPLFRPYSFPGGSSRKPKKDNLSIKPPATSSLKVNAKLASADDTSSNFNKDNWLASADELSRSFPPGFLFGGGSASYQYEGAVKEGGRTPSIWDTFAHEFPDKIADGSNGDVAVDFYHRYKDDVKLMKKIGVNGFRFSISWTRILPSGKLCGGVNKEGVAFYNSLINELLANGIEPFVTIFHWDLPQGLENEYDGFLSGQIVNDYRDYAEVCFQEFGDRVKFWTTLNEPWTFCYNGYVNGSFAPGRCSTCTAGNSGTEPYLVAHNLLLSHAAVAQLYKNKYQASQKGQIGIVLVCFWMVPYSDCPYDCEAAQRALDFMLGWFLHPLTYGDYPESMRHLVGERLPQFTEMQAMMMKGSIDFLGLNYYTSIYAANNESPNPHDISYTTDSRVNLFQKRDGILIGPATGTPAFCFCPEGIRDLLVYTKEKYNNPIIYITECGLAEANINTVDQGVKDVERVEFYYEHLKFLRSAIKKGVNVKGFFTWSLLDDWEWNSGFNVRFGIVYIDHEDGLKRYLKYSALWFKKLFGK.

Residues 1–66 (MATITTLASS…NFNKDNWLAS (66 aa)) constitute a chloroplast transit peptide. Residues 18 to 37 (SFPGGSSRKPKKDNLSIKPP) are disordered. A beta-D-glucoside contacts are provided by residues Gln88, His192, and 237-238 (NE). Residue Glu238 is the Proton donor of the active site. Cys257 and Cys260 are oxidised to a cystine. A beta-D-glucoside is bound by residues Tyr376, Glu447, Trp494, 501-502 (EW), and Phe510. Residue Glu447 is the Nucleophile of the active site.

This sequence belongs to the glycosyl hydrolase 1 family. In terms of tissue distribution, expressed in young and mature leaves, but not in fruit and stem.

It is found in the plastid. Its subcellular location is the chloroplast. The enzyme catalyses 7-[beta-D-apiofuranosyl-(1-&gt;6)-beta-D-glucopyranosyloxy]isoflavonoid + H2O = a 7-hydroxyisoflavonoid + beta-D-apiofuranosyl-(1-&gt;6)-D-glucose.. Disaccharide-specific acuminosidase, hydrolyzes the beta-glycosidic bond between p-allylphenol and acuminose with retention of anomeric configuration. Has highest activity towards furcatin, and lower activity towards beta-primeverosides and beta-vicianoside. Has very low activity towards beta-gentobiosides. In Viburnum furcatum (Scarlet leaved viburnum), this protein is Furcatin hydrolase.